Reading from the N-terminus, the 439-residue chain is Xylose isomerase (439 aa).

Catalysis depends on residues H101 and D104. Positions 232, 268, 271, 296, 307, 309, and 339 each coordinate Mg(2+).

It belongs to the xylose isomerase family. Homotetramer. It depends on Mg(2+) as a cofactor.

The protein localises to the cytoplasm. It catalyses the reaction alpha-D-xylose = alpha-D-xylulofuranose. The sequence is that of Xylose isomerase from Yersinia pseudotuberculosis serotype O:1b (strain IP 31758).